The sequence spans 356 residues: Nucleosome assembly protein 1;4 (356 aa).

Residues 34–88 (VNALKNKLQNLAGQHSDILETLTPQVRKRVDVLRELQSQHDELESHFFEERAALE) are a coiled coil. The Nuclear export signal signature appears at 55 to 70 (LTPQVRKRVDVLRELQ). The Nuclear localization signal motif lies at 230-235 (KKKPKK). The disordered stretch occupies residues 304–356 (FTGEAAEGDEFEDIEDDDDDDDDDDDEDDEDEEDEDDEEEEKSKKKSSALKVE). Residues 309-343 (AEGDEFEDIEDDDDDDDDDDDEDDEDEEDEDDEEE) show a composition bias toward acidic residues. The span at 347 to 356 (KKKSSALKVE) shows a compositional bias: basic residues.

It belongs to the nucleosome assembly protein (NAP) family. As to quaternary structure, can form homomeric and heteromeric protein complexes with NAP1;3. Binds histones H2A and H2B in vivo. Also able to bind histones H1 and H4 in vitro. Interacts with CYCB1;1 and with alpha tubulin.

The protein resides in the nucleus. It is found in the cytoplasm. In terms of biological role, may modulate chromatin structure by regulation of nucleosome assembly/disassembly. Could function together with B-type cyclins in the regulation of microtubule dynamics. This chain is Nucleosome assembly protein 1;4 (NAP1;4), found in Nicotiana tabacum (Common tobacco).